A 225-amino-acid chain; its full sequence is Orotidine 5'-phosphate decarboxylase (225 aa).

Substrate is bound by residues D9, K31, D58–T67, T115, R176, Q184, G204, and R205. Residue K60 is the Proton donor of the active site.

Belongs to the OMP decarboxylase family. Type 1 subfamily. In terms of assembly, homodimer.

The enzyme catalyses orotidine 5'-phosphate + H(+) = UMP + CO2. It functions in the pathway pyrimidine metabolism; UMP biosynthesis via de novo pathway; UMP from orotate: step 2/2. In terms of biological role, catalyzes the decarboxylation of orotidine 5'-monophosphate (OMP) to uridine 5'-monophosphate (UMP). The polypeptide is Orotidine 5'-phosphate decarboxylase (Wolbachia sp. subsp. Brugia malayi (strain TRS)).